The primary structure comprises 118 residues: Autophagy-related protein 8 (118 aa).

Glycine 116 carries the Phosphatidylethanolamine amidated glycine lipid modification. Positions 117–118 are cleaved as a propeptide — removed in mature form; the sequence is SI.

This sequence belongs to the ATG8 family. Conjugation to phosphatidylethanolamine (PE) leads to homodimerization. Interacts with ATG1, ATG3, ATG4, ATG7 and ATG12. In terms of processing, the C-terminal Ser-117 and Ile-118 residues of ATG8 are removed by ATG4 to expose Gly-116 at the C-terminus. This Gly-116 forms then a thioester bond with ATG7 (E1-like activating enzyme) before being transferred to ATG3 (the specific E2 conjugating enzyme), in order to be finally amidated with phosphatidylethanolamine. This lipid modification anchors ATG8 to membranes and can be reversed by ATG4, releasing soluble ATG8.

The protein resides in the cytoplasmic vesicle. The protein localises to the cvt vesicle membrane. It is found in the autophagosome membrane. Its subcellular location is the vacuole membrane. Its function is as follows. Ubiquitin-like modifier involved in cytoplasm to vacuole transport (Cvt) vesicles and autophagosome formation. With ATG4, mediates the delivery of the vesicles and autophagosomes to the vacuole via the microtubule cytoskeleton. Required for selective autophagic degradation of the nucleus (nucleophagy) as well as for mitophagy which contributes to regulate mitochondrial quantity and quality by eliminating the mitochondria to a basal level to fulfill cellular energy requirements and preventing excess ROS production. Also participates in membrane fusion events that take place in the early secretory pathway. Also involved in endoplasmic reticulum-specific autophagic process and is essential for the survival of cells subjected to severe ER stress. The ATG8-PE conjugate mediates tethering between adjacent membranes and stimulates membrane hemifusion, leading to expansion of the autophagosomal membrane during autophagy. Moreover not only conjugation, but also subsequent ATG8-PE deconjugation is an important step required to facilitate multiple events during macroautophagy, and especially for efficient autophagosome biogenesis, the assembly of ATG9-containing tubulovesicular clusters into phagophores/autophagosomes, and for the disassembly of PAS-associated ATG components. Contributes to conidiation by regulating the conidial levels of the conidiation-related protein CP15 and mediates fungal oxidation resistance by controlling total superoxide dismutase (SOD) activity. This Beauveria bassiana (strain ARSEF 2860) (White muscardine disease fungus) protein is Autophagy-related protein 8.